The chain runs to 305 residues: Protoheme IX farnesyltransferase (305 aa).

The next 9 helical transmembrane spans lie at 28–48, 52–72, 101–121, 122–142, 149–169, 174–194, 218–238, 240–260, and 283–303; these read IIEL…QGVP, LVLL…ALNM, LAFG…TVNW, LSAW…TMIL, NIVW…SSVT, WAPV…YWPL, VVAR…LLLT, LGYT…FWLW, and LFHW…VDPF.

This sequence belongs to the UbiA prenyltransferase family. Protoheme IX farnesyltransferase subfamily.

It localises to the cell membrane. It catalyses the reaction heme b + (2E,6E)-farnesyl diphosphate + H2O = Fe(II)-heme o + diphosphate. Its pathway is porphyrin-containing compound metabolism; heme O biosynthesis; heme O from protoheme: step 1/1. Its function is as follows. Converts heme B (protoheme IX) to heme O by substitution of the vinyl group on carbon 2 of heme B porphyrin ring with a hydroxyethyl farnesyl side group. In Streptomyces avermitilis (strain ATCC 31267 / DSM 46492 / JCM 5070 / NBRC 14893 / NCIMB 12804 / NRRL 8165 / MA-4680), this protein is Protoheme IX farnesyltransferase.